We begin with the raw amino-acid sequence, 127 residues long: Major sperm protein 10/36/56/76 (127 aa).

Residue Ala2 is modified to N-acetylalanine. Residues 9-126 (DIQTQPNAKI…RRKNLPIEYN (118 aa)) enclose the MSP domain.

In terms of tissue distribution, sperm.

The protein localises to the cell projection. It is found in the pseudopodium. It localises to the cytoplasm. The protein resides in the cytoskeleton. Central component in molecular interactions underlying sperm crawling. Forms an extensive filament system that extends from sperm villipoda, along the leading edge of the pseudopod. This chain is Major sperm protein 10/36/56/76 (msp-10), found in Caenorhabditis elegans.